The following is a 366-amino-acid chain: Arfaptin-1 (366 aa).

The tract at residues 1–78 is disordered; it reads MAEESPKNSA…SSAPPLPCVL (78 aa). An N-acetylalanine modification is found at Ala2. Ser5 carries the post-translational modification Phosphoserine. Over residues 22–35 the composition is skewed to basic and acidic residues; it reads GDAHEHGYNRDLKH. 2 positions are modified to phosphoserine: Ser36 and Ser39. Polar residues predominate over residues 44–53; that stretch reads SETQITSHGF. Phosphoserine occurs at positions 69, 79, and 125. The AH domain maps to 146–346; that stretch reads TVDLELEAQI…NQKQLEQTLK (201 aa). The residue at position 354 (Thr354) is a Phosphothreonine.

Forms homodimers or heterodimers with ARFIP2. Interacts with non-myristoylated GTP-bound ARF3, but not to GDP-bound ARF3. Interacts with ARF1. Binds with lower affinity to ARF5 and with very little affinity to ARF6. Interacts with ARL1. Interacts with ATG9A.

It localises to the golgi apparatus. The protein localises to the trans-Golgi network membrane. Plays a role in controlling biogenesis of secretory granules at the trans-Golgi network. Mechanistically, binds ARF-GTP at the neck of a growing secretory granule precursor and forms a protective scaffold. Once the granule precursor has been completely loaded, active PRKD1 phosphorylates ARFIP1 and releases it from ARFs. In turn, ARFs induce fission. Through this mechanism, ensures proper secretory granule formation at the Golgi of pancreatic beta cells. This is Arfaptin-1 from Rattus norvegicus (Rat).